The sequence spans 424 residues: UPF0597 protein Sbal223_1296 (424 aa).

It belongs to the UPF0597 family.

This Shewanella baltica (strain OS223) protein is UPF0597 protein Sbal223_1296.